Consider the following 551-residue polypeptide: Membrane protein insertase YidC (551 aa).

Residues 3–23 form a helical membrane-spanning segment; it reads ANHIRILLLVTIAIMLISLMG. Positions 30–43 are enriched in low complexity; the sequence is PSNSSQSQTTQTQQ. Residues 30-61 form a disordered region; the sequence is PSNSSQSQTTQTQQDNSHYNSDTPATTNVSTS. Residues 44–61 are compositionally biased toward polar residues; the sequence is DNSHYNSDTPATTNVSTS. Transmembrane regions (helical) follow at residues 361-381, 431-451, and 504-524; these read LVGN…LIFY, LSGC…YWVL, and IMMF…SGLV.

The protein belongs to the OXA1/ALB3/YidC family. Type 1 subfamily. In terms of assembly, interacts with the Sec translocase complex via SecD. Specifically interacts with transmembrane segments of nascent integral membrane proteins during membrane integration.

It localises to the cell inner membrane. Its function is as follows. Required for the insertion and/or proper folding and/or complex formation of integral membrane proteins into the membrane. Involved in integration of membrane proteins that insert both dependently and independently of the Sec translocase complex, as well as at least some lipoproteins. Aids folding of multispanning membrane proteins. This Francisella philomiragia subsp. philomiragia (strain ATCC 25017 / CCUG 19701 / FSC 153 / O#319-036) protein is Membrane protein insertase YidC.